A 343-amino-acid polypeptide reads, in one-letter code: S-adenosylmethionine:tRNA ribosyltransferase-isomerase (343 aa).

It belongs to the QueA family. In terms of assembly, monomer.

The protein resides in the cytoplasm. The enzyme catalyses 7-aminomethyl-7-carbaguanosine(34) in tRNA + S-adenosyl-L-methionine = epoxyqueuosine(34) in tRNA + adenine + L-methionine + 2 H(+). Its pathway is tRNA modification; tRNA-queuosine biosynthesis. Functionally, transfers and isomerizes the ribose moiety from AdoMet to the 7-aminomethyl group of 7-deazaguanine (preQ1-tRNA) to give epoxyqueuosine (oQ-tRNA). This is S-adenosylmethionine:tRNA ribosyltransferase-isomerase from Syntrophotalea carbinolica (strain DSM 2380 / NBRC 103641 / GraBd1) (Pelobacter carbinolicus).